A 128-amino-acid polypeptide reads, in one-letter code: Gastrotropin (128 aa).

A2 is modified (N-acetylalanine).

This sequence belongs to the calycin superfamily. Fatty-acid binding protein (FABP) family. Expressed in ovary granulosa and luteal cells.

The protein resides in the cytoplasm. Its subcellular location is the membrane. Functionally, binds to bile acids and is involved in enterohepatic bile acid metabolism. Required for efficient apical to basolateral transport of conjugated bile acids in ileal enterocytes. Stimulates gastric acid and pepsinogen secretion. The chain is Gastrotropin (Fabp6) from Mus musculus (Mouse).